We begin with the raw amino-acid sequence, 242 residues long: Small ribosomal subunit protein uS2 (242 aa).

Belongs to the universal ribosomal protein uS2 family.

The sequence is that of Small ribosomal subunit protein uS2 from Shewanella loihica (strain ATCC BAA-1088 / PV-4).